Reading from the N-terminus, the 271-residue chain is Undecaprenyl-diphosphatase 2 (271 aa).

8 helical membrane-spanning segments follow: residues 1–21 (MNFF…LFPI), 46–66 (NFLE…IVYF), 88–108 (ALIV…EQTI), 111–131 (AFSD…LLFF), 146–166 (LKGW…IPGF), 190–210 (SMLL…PKLI), 220–240 (LSLI…YILM), and 251–271 (MLPF…SKAI).

Belongs to the UppP family.

The protein resides in the cell membrane. The enzyme catalyses di-trans,octa-cis-undecaprenyl diphosphate + H2O = di-trans,octa-cis-undecaprenyl phosphate + phosphate + H(+). Its function is as follows. Catalyzes the dephosphorylation of undecaprenyl diphosphate (UPP). Confers resistance to bacitracin. The chain is Undecaprenyl-diphosphatase 2 from Oenococcus oeni (strain ATCC BAA-331 / PSU-1).